A 183-amino-acid chain; its full sequence is uncharacterized protein (183 aa).

Positions 1–23 are cleaved as a signal peptide; the sequence is MSAFKKSLLVAGVAMILSNNVFA. An intrachain disulfide couples cysteine 41 to cysteine 80.

Belongs to the fimbrial protein family.

It is found in the fimbrium. This is an uncharacterized protein from Escherichia coli (strain K12).